A 443-amino-acid chain; its full sequence is Methyl-coenzyme M reductase subunit beta (443 aa).

Residue Tyr-367 participates in coenzyme M binding. Gly-369 provides a ligand contact to coenzyme B.

It belongs to the methyl-coenzyme M reductase beta subunit family. MCR is a hexamer of two alpha, two beta, and two gamma chains, forming a dimer of heterotrimers. Coenzyme F430 is required as a cofactor.

The protein resides in the cytoplasm. It carries out the reaction coenzyme B + methyl-coenzyme M = methane + coenzyme M-coenzyme B heterodisulfide. Its pathway is one-carbon metabolism; methyl-coenzyme M reduction; methane from methyl-coenzyme M: step 1/1. Component of the methyl-coenzyme M reductase (MCR) I that catalyzes the reductive cleavage of methyl-coenzyme M (CoM-S-CH3 or 2-(methylthio)ethanesulfonate) using coenzyme B (CoB or 7-mercaptoheptanoylthreonine phosphate) as reductant which results in the production of methane and the mixed heterodisulfide of CoB and CoM (CoM-S-S-CoB). This is the final step in methanogenesis. The sequence is that of Methyl-coenzyme M reductase subunit beta (mcrB) from Methanococcus vannielii.